Here is a 303-residue protein sequence, read N- to C-terminus: UDP-3-O-acyl-N-acetylglucosamine deacetylase (303 aa).

Residues histidine 78, histidine 237, and aspartate 241 each contribute to the Zn(2+) site. The active-site Proton donor is the histidine 264.

Belongs to the LpxC family. It depends on Zn(2+) as a cofactor.

It carries out the reaction a UDP-3-O-[(3R)-3-hydroxyacyl]-N-acetyl-alpha-D-glucosamine + H2O = a UDP-3-O-[(3R)-3-hydroxyacyl]-alpha-D-glucosamine + acetate. It participates in glycolipid biosynthesis; lipid IV(A) biosynthesis; lipid IV(A) from (3R)-3-hydroxytetradecanoyl-[acyl-carrier-protein] and UDP-N-acetyl-alpha-D-glucosamine: step 2/6. Its function is as follows. Catalyzes the hydrolysis of UDP-3-O-myristoyl-N-acetylglucosamine to form UDP-3-O-myristoylglucosamine and acetate, the committed step in lipid A biosynthesis. The sequence is that of UDP-3-O-acyl-N-acetylglucosamine deacetylase from Teredinibacter turnerae (strain ATCC 39867 / T7901).